Reading from the N-terminus, the 223-residue chain is Endonuclease V (223 aa).

Positions 35 and 103 each coordinate Mg(2+).

Belongs to the endonuclease V family. The cofactor is Mg(2+).

Its subcellular location is the cytoplasm. It carries out the reaction Endonucleolytic cleavage at apurinic or apyrimidinic sites to products with a 5'-phosphate.. Functionally, DNA repair enzyme involved in the repair of deaminated bases. Selectively cleaves double-stranded DNA at the second phosphodiester bond 3' to a deoxyinosine leaving behind the intact lesion on the nicked DNA. The protein is Endonuclease V of Klebsiella pneumoniae subsp. pneumoniae (strain ATCC 700721 / MGH 78578).